Here is a 120-residue protein sequence, read N- to C-terminus: Large ribosomal subunit protein uL18 (120 aa).

It belongs to the universal ribosomal protein uL18 family. As to quaternary structure, part of the 50S ribosomal subunit; part of the 5S rRNA/L5/L18/L25 subcomplex. Contacts the 5S and 23S rRNAs.

This is one of the proteins that bind and probably mediate the attachment of the 5S RNA into the large ribosomal subunit, where it forms part of the central protuberance. The polypeptide is Large ribosomal subunit protein uL18 (Rhodospirillum rubrum (strain ATCC 11170 / ATH 1.1.1 / DSM 467 / LMG 4362 / NCIMB 8255 / S1)).